Consider the following 161-residue polypeptide: Lipoprotein signal peptidase (161 aa).

The next 4 membrane-spanning stretches (helical) occupy residues 11–31 (PLFW…KLWV), 44–64 (LWSG…FSAF), 66–86 (GGAG…IIFA), and 100–120 (GCIL…GHVI). Catalysis depends on residues Asp-121 and Asp-137. A helical membrane pass occupies residues 135 to 155 (LADVSINIGIAALLWASFFPV).

The protein belongs to the peptidase A8 family.

The protein localises to the cell inner membrane. The catalysed reaction is Release of signal peptides from bacterial membrane prolipoproteins. Hydrolyzes -Xaa-Yaa-Zaa-|-(S,diacylglyceryl)Cys-, in which Xaa is hydrophobic (preferably Leu), and Yaa (Ala or Ser) and Zaa (Gly or Ala) have small, neutral side chains.. The protein operates within protein modification; lipoprotein biosynthesis (signal peptide cleavage). Functionally, this protein specifically catalyzes the removal of signal peptides from prolipoproteins. This chain is Lipoprotein signal peptidase, found in Synechocystis sp. (strain ATCC 27184 / PCC 6803 / Kazusa).